The primary structure comprises 266 residues: Killer cell lectin-like receptor 5 (266 aa).

Topologically, residues 1–44 are cytoplasmic; that stretch reads MSEPEVTYSTVRLHKSSGLQRLVSHEEIQGPGEAGYRKCSVPWQ. The helical; Signal-anchor for type II membrane protein transmembrane segment at 45-66 threads the bilayer; it reads LTVRSLGIFCFLLLVTVAVLAV. Topologically, residues 67-266 are extracellular; sequence KIFQYSQHKQ…CGKKLDHFPG (200 aa). N-linked (GlcNAc...) asparagine glycosylation is found at N87 and N104. Positions 143–261 constitute a C-type lectin domain; that stretch reads GVKHWFCYGT…SYFCICGKKL (119 aa). 4 disulfide bridges follow: C149/C154, C167/C255, C171/C257, and C236/C249. The N-linked (GlcNAc...) asparagine glycan is linked to N250.

Homodimer; disulfide-linked. In terms of tissue distribution, mostly expressed in NK cells, but also observed on NK T and memory T-cells.

The protein resides in the membrane. Its function is as follows. Receptor on natural killer (NK) cells for class I MHC. The protein is Killer cell lectin-like receptor 5 (Klra5) of Mus musculus (Mouse).